Reading from the N-terminus, the 1405-residue chain is DNA-directed RNA polymerase subunit beta' (1405 aa).

4 residues coordinate Zn(2+): C70, C72, C85, and C88. Positions 458, 460, and 462 each coordinate Mg(2+). Residues C813, C887, C894, and C897 each contribute to the Zn(2+) site.

Belongs to the RNA polymerase beta' chain family. The RNAP catalytic core consists of 2 alpha, 1 beta, 1 beta' and 1 omega subunit. When a sigma factor is associated with the core the holoenzyme is formed, which can initiate transcription. Mg(2+) is required as a cofactor. Zn(2+) serves as cofactor.

It catalyses the reaction RNA(n) + a ribonucleoside 5'-triphosphate = RNA(n+1) + diphosphate. Functionally, DNA-dependent RNA polymerase catalyzes the transcription of DNA into RNA using the four ribonucleoside triphosphates as substrates. This chain is DNA-directed RNA polymerase subunit beta', found in Albidiferax ferrireducens (strain ATCC BAA-621 / DSM 15236 / T118) (Rhodoferax ferrireducens).